The sequence spans 225 residues: MCDGNRRWAREAGFTDVSHGHRVGAKKIGEMVRWCDDVDVNLVTVYLLSMENLGRSSEELQLLFDIIADVADELARPETNCRVRLVGHLDLLPDPVACRLRKAEEATVNNTGIAVNMAVGYGGRQEIVDAVQKLLTIGKDEGLSVDELIESVKVDAISTHLYTSGQPDPDLVIRTSGEQRLSGFMLWQSAYSEIWFTDTYWPAFRRIDFLRAIRDYSQRSRRFGK.

The active site involves Asp3. Position 3 (Asp3) interacts with Mg(2+). Substrate is bound by residues 4-7 (GNRR), Trp8, His21, and 49-51 (SME). The active-site Proton acceptor is Asn52. Residues Arg55, Arg174, and 180 to 182 (RLS) each bind substrate. Residue Glu193 coordinates Mg(2+).

It belongs to the UPP synthase family. In terms of assembly, homodimer. Mg(2+) serves as cofactor.

Catalyzes the condensation of isopentenyl diphosphate (IPP) with allylic pyrophosphates generating different type of terpenoids. The polypeptide is Isoprenyl transferase 1 (Corynebacterium glutamicum (strain ATCC 13032 / DSM 20300 / JCM 1318 / BCRC 11384 / CCUG 27702 / LMG 3730 / NBRC 12168 / NCIMB 10025 / NRRL B-2784 / 534)).